A 256-amino-acid polypeptide reads, in one-letter code: 5-keto-4-deoxy-D-glucarate aldolase (256 aa).

His50 functions as the Proton acceptor in the catalytic mechanism. Gln151 is a substrate binding site. Glu153 is a Mg(2+) binding site. Substrate-binding residues include Ser178 and Asp179. Mg(2+) is bound at residue Asp179.

Belongs to the HpcH/HpaI aldolase family. KDGluc aldolase subfamily. In terms of assembly, homohexamer; trimer of dimers. It depends on Mg(2+) as a cofactor.

The catalysed reaction is 5-dehydro-4-deoxy-D-glucarate = 2-hydroxy-3-oxopropanoate + pyruvate. It catalyses the reaction 2-dehydro-3-deoxy-D-glucarate = 2-hydroxy-3-oxopropanoate + pyruvate. It participates in carbohydrate acid metabolism; galactarate degradation; D-glycerate from galactarate: step 2/3. Functionally, catalyzes the reversible retro-aldol cleavage of both 5-keto-4-deoxy-D-glucarate and 2-keto-3-deoxy-D-glucarate to pyruvate and tartronic semialdehyde. In Shigella dysenteriae serotype 1 (strain Sd197), this protein is 5-keto-4-deoxy-D-glucarate aldolase.